Here is a 352-residue protein sequence, read N- to C-terminus: S-adenosylmethionine:tRNA ribosyltransferase-isomerase (352 aa).

This sequence belongs to the QueA family. In terms of assembly, monomer.

It localises to the cytoplasm. It catalyses the reaction 7-aminomethyl-7-carbaguanosine(34) in tRNA + S-adenosyl-L-methionine = epoxyqueuosine(34) in tRNA + adenine + L-methionine + 2 H(+). Its pathway is tRNA modification; tRNA-queuosine biosynthesis. Transfers and isomerizes the ribose moiety from AdoMet to the 7-aminomethyl group of 7-deazaguanine (preQ1-tRNA) to give epoxyqueuosine (oQ-tRNA). The polypeptide is S-adenosylmethionine:tRNA ribosyltransferase-isomerase (Dechloromonas aromatica (strain RCB)).